The sequence spans 823 residues: Zygotic DNA replication licensing factor mcm6-A (823 aa).

The C4-type zinc-finger motif lies at 159 to 186 (CLDCQTLVRDVEQQFKYTQPSICRNPVC). Residues 347–554 (LYHNLCTSLF…TDYAIARRIV (208 aa)) enclose the MCM domain. 397–404 (GDPSTAKS) provides a ligand contact to ATP. The Arginine finger motif lies at 529-532 (SRFD). Residues 663 to 710 (PDVNLDQDDEHEPEDETQEGTNGDAEVPNGVNGHVNGINGHSQESNAA) are disordered. Over residues 667–680 (LDQDDEHEPEDETQ) the composition is skewed to acidic residues. A compositionally biased stretch (low complexity) spans 691–703 (NGVNGHVNGINGH).

It belongs to the MCM family. As to quaternary structure, component of the mcm2-7 complex (RLF-M). The complex forms a toroidal hexameric ring with the proposed subunit order mcm2-mcm6-mcm4-mcm7-mcm3-mcm5 (By simililarity). Begins to associate with zmcm3, mcm4 and mcm7 into mcm complexes at the neurula stage. May replace mmcm6 in the complex that functions during licensing of DNA replication.

It localises to the nucleus. The enzyme catalyses ATP + H2O = ADP + phosphate + H(+). Acts as a component of the mcm2-7 complex (mcm complex) which is the putative replicative helicase essential for 'once per cell cycle' DNA replication initiation and elongation in eukaryotic cells. The active ATPase sites in the mcm2-7 ring are formed through the interaction surfaces of two neighboring subunits such that a critical structure of a conserved arginine finger motif is provided in trans relative to the ATP-binding site of the Walker A box of the adjacent subunit. The six ATPase active sites, however, are likely to contribute differentially to the complex helicase activity. The existence of maternal and zygotic forms of mcm3 and mcm6 suggests that specific forms of mcm2-7 complexes may be used during different stages of development. May replace mmcm6 in the mcm2-7 complex. This Xenopus laevis (African clawed frog) protein is Zygotic DNA replication licensing factor mcm6-A (zmcm6-a).